A 156-amino-acid chain; its full sequence is Small ribosomal subunit protein uS7 (156 aa).

The protein belongs to the universal ribosomal protein uS7 family. As to quaternary structure, part of the 30S ribosomal subunit. Contacts proteins S9 and S11.

Functionally, one of the primary rRNA binding proteins, it binds directly to 16S rRNA where it nucleates assembly of the head domain of the 30S subunit. Is located at the subunit interface close to the decoding center, probably blocks exit of the E-site tRNA. The polypeptide is Small ribosomal subunit protein uS7 (Synechococcus sp. (strain WH7803)).